Reading from the N-terminus, the 64-residue chain is Large ribosomal subunit protein uL29 (64 aa).

This sequence belongs to the universal ribosomal protein uL29 family.

The protein is Large ribosomal subunit protein uL29 of Burkholderia ambifaria (strain MC40-6).